Consider the following 518-residue polypeptide: Major facilitator superfamily domain-containing protein 8 (518 aa).

The interval 1–20 (MAGLRNESEQEPLLGDTPGS) is disordered. Over 1-40 (MAGLRNESEQEPLLGDTPGSREWDILETEEHYKSRWRSIR) the chain is Cytoplasmic. The short motif at 13–14 (LL) is the Dileucine internalization motif element. A helical transmembrane segment spans residues 41–61 (ILYLTMFLSSVGFSVVMMSIW). Topologically, residues 62-74 (PYLQKIDPTADTS) are extracellular. A helical membrane pass occupies residues 75 to 95 (FLGWVIASYSLGQMVASPIFG). The Cytoplasmic portion of the chain corresponds to 96–105 (LWSNYRPRKE). Residues 106-126 (PLIVSILISVAANCLYAYLHI) form a helical membrane-spanning segment. Residues 127–131 (PASHN) are Extracellular-facing. The helical transmembrane segment at 132–152 (KYYMLVARGLLGIGAGNVAVV) threads the bilayer. The Cytoplasmic portion of the chain corresponds to 153-173 (RSYTAGATSLQERTSSMANIS). The helical transmembrane segment at 174–194 (MCQALGFILGPVFQTCFTFLG) threads the bilayer. Residues 195-211 (EKGVTWDVIKLQINMYT) are Extracellular-facing. A helical membrane pass occupies residues 212 to 232 (TPVLLSAFLGILNIILILAIL). Over 233 to 266 (REHRVDDSGRQCKSINFEEASTDEAQVPQGNIDQ) the chain is Cytoplasmic. The helical transmembrane segment at 267-287 (VAVVAINVLFFVTLFIFALFE) threads the bilayer. Residues 288 to 304 (TIITPLTMDMYAWTQEQ) are Extracellular-facing. Residues 305–325 (AVLYNGIILAALGVEAVVIFL) form a helical membrane-spanning segment. Residues 326 to 337 (GVKLLSKKIGER) lie on the Cytoplasmic side of the membrane. A helical membrane pass occupies residues 338 to 358 (AILLGGLIVVWVGFFILLPWG). Topologically, residues 359–412 (NQFPKIQWEDLHNNSIPNTTFGEIIIGLWKSPMEDDNERPTGCSIEQAWCLYTP) are extracellular. 2 N-linked (GlcNAc...) asparagine glycosylation sites follow: Asn371 and Asn376. A helical transmembrane segment spans residues 413–433 (VIHLAQFLTSAVLIGLGYPVC). Residues 434-451 (NLMSYTLYSKILGPKPQG) are Cytoplasmic-facing. Residues 452 to 472 (VYMGWLTASGSGARILGPMFI) traverse the membrane as a helical segment. The Extracellular segment spans residues 473 to 482 (SQVYAHWGPR). The helical transmembrane segment at 483–503 (WAFSLVCGIIVLTITLLGVVY) threads the bilayer. Topologically, residues 504-518 (KRLIALSVRYGRIQE) are cytoplasmic.

The protein belongs to the major facilitator superfamily. Expressed at very low levels in all tissues tested.

It is found in the endosome membrane. Its subcellular location is the lysosome membrane. It catalyses the reaction chloride(in) = chloride(out). The enzyme catalyses iodide(out) = iodide(in). It carries out the reaction fluoride(in) = fluoride(out). With respect to regulation, inhibited by chloride channel blockers 4,4'-diisothiocyano-2,2'-stilbenedisulfonate (DIDS), niflumic acid (NFA), and 5-Nitro-2-(3-phenylpropylamino) benzoic acid (NPPB). In terms of biological role, outward-rectifying chloride channel involved in endolysosomal chloride homeostasis, membrane fusion and function. Conducts chloride currents up to hundreds of picoamperes. Regulates lysosomal calcium content by reducing the lysosomal membrane potential, thereby activating TRPML1 channel and further release of lysosomal calcium ions. Regulates the pH in endolysosomal compartments and may contribute to progressive acidification from endosome to lysosome. Permeable to other halides such as iodide and fluoride ions. The sequence is that of Major facilitator superfamily domain-containing protein 8 from Homo sapiens (Human).